The sequence spans 255 residues: Tryptophan synthase alpha chain (255 aa).

Catalysis depends on proton acceptor residues E51 and D62.

This sequence belongs to the TrpA family. As to quaternary structure, tetramer of two alpha and two beta chains.

The catalysed reaction is (1S,2R)-1-C-(indol-3-yl)glycerol 3-phosphate + L-serine = D-glyceraldehyde 3-phosphate + L-tryptophan + H2O. It participates in amino-acid biosynthesis; L-tryptophan biosynthesis; L-tryptophan from chorismate: step 5/5. Its function is as follows. The alpha subunit is responsible for the aldol cleavage of indoleglycerol phosphate to indole and glyceraldehyde 3-phosphate. This is Tryptophan synthase alpha chain from Maridesulfovibrio salexigens (strain ATCC 14822 / DSM 2638 / NCIMB 8403 / VKM B-1763) (Desulfovibrio salexigens).